We begin with the raw amino-acid sequence, 422 residues long: Adenosylhomocysteinase (422 aa).

Positions 129 and 154 each coordinate substrate. 155–157 contributes to the NAD(+) binding site; it reads TTT. Positions 184 and 188 each coordinate substrate. Residues N189, 218-223, E241, N276, 297-299, and N344 contribute to the NAD(+) site; these read GYGWCG and AGH.

This sequence belongs to the adenosylhomocysteinase family. NAD(+) serves as cofactor.

It localises to the cytoplasm. It carries out the reaction S-adenosyl-L-homocysteine + H2O = L-homocysteine + adenosine. Its pathway is amino-acid biosynthesis; L-homocysteine biosynthesis; L-homocysteine from S-adenosyl-L-homocysteine: step 1/1. Its function is as follows. May play a key role in the regulation of the intracellular concentration of adenosylhomocysteine. In Pyrococcus abyssi (strain GE5 / Orsay), this protein is Adenosylhomocysteinase.